Here is a 332-residue protein sequence, read N- to C-terminus: Holliday junction branch migration complex subunit RuvB (332 aa).

Residues 1–181 (MSRILDNEIM…FGITGHMEYY (181 aa)) are large ATPase domain (RuvB-L). ATP-binding positions include Leu20, Arg21, Gly62, Lys65, Thr66, Thr67, 128-130 (EDF), Arg171, Tyr181, and Arg218. Position 66 (Thr66) interacts with Mg(2+). The small ATPAse domain (RuvB-S) stretch occupies residues 182–252 (AHADLTEIVE…ITDKALTMLD (71 aa)). The interval 255–332 (HEGLDYVDQK…EHLGYEYNEK (78 aa)) is head domain (RuvB-H). DNA contacts are provided by Arg291, Arg310, Arg312, and Arg315.

This sequence belongs to the RuvB family. Homohexamer. Forms an RuvA(8)-RuvB(12)-Holliday junction (HJ) complex. HJ DNA is sandwiched between 2 RuvA tetramers; dsDNA enters through RuvA and exits via RuvB. An RuvB hexamer assembles on each DNA strand where it exits the tetramer. Each RuvB hexamer is contacted by two RuvA subunits (via domain III) on 2 adjacent RuvB subunits; this complex drives branch migration. In the full resolvosome a probable DNA-RuvA(4)-RuvB(12)-RuvC(2) complex forms which resolves the HJ.

The protein localises to the cytoplasm. The enzyme catalyses ATP + H2O = ADP + phosphate + H(+). In terms of biological role, the RuvA-RuvB-RuvC complex processes Holliday junction (HJ) DNA during genetic recombination and DNA repair, while the RuvA-RuvB complex plays an important role in the rescue of blocked DNA replication forks via replication fork reversal (RFR). RuvA specifically binds to HJ cruciform DNA, conferring on it an open structure. The RuvB hexamer acts as an ATP-dependent pump, pulling dsDNA into and through the RuvAB complex. RuvB forms 2 homohexamers on either side of HJ DNA bound by 1 or 2 RuvA tetramers; 4 subunits per hexamer contact DNA at a time. Coordinated motions by a converter formed by DNA-disengaged RuvB subunits stimulates ATP hydrolysis and nucleotide exchange. Immobilization of the converter enables RuvB to convert the ATP-contained energy into a lever motion, pulling 2 nucleotides of DNA out of the RuvA tetramer per ATP hydrolyzed, thus driving DNA branch migration. The RuvB motors rotate together with the DNA substrate, which together with the progressing nucleotide cycle form the mechanistic basis for DNA recombination by continuous HJ branch migration. Branch migration allows RuvC to scan DNA until it finds its consensus sequence, where it cleaves and resolves cruciform DNA. This is Holliday junction branch migration complex subunit RuvB from Streptococcus pneumoniae (strain CGSP14).